Reading from the N-terminus, the 246-residue chain is Mast cell protease 9 (246 aa).

A signal peptide spans 1–18; the sequence is MQALLFLMALLLPSRAGA. Positions 19-20 are cleaved as a propeptide — activation peptide; sequence EE. The Peptidase S1 domain maps to 21–244; the sequence is IIGGVESEPH…HVPWINRVIK (224 aa). Cys50 and Cys66 form a disulfide bridge. Catalysis depends on charge relay system residues His65 and Asp109. 2 disulfide bridges follow: Cys143–Cys208 and Cys174–Cys187. The active-site Charge relay system is Ser202.

This sequence belongs to the peptidase S1 family. Granzyme subfamily. In terms of tissue distribution, selectively expressed in uterine mast cells.

The chain is Mast cell protease 9 (Mcpt9) from Mus musculus (Mouse).